The chain runs to 184 residues: ATP synthase subunit delta (184 aa).

The protein belongs to the ATPase delta chain family. As to quaternary structure, F-type ATPases have 2 components, F(1) - the catalytic core - and F(0) - the membrane proton channel. F(1) has five subunits: alpha(3), beta(3), gamma(1), delta(1), epsilon(1). CF(0) has four main subunits: a(1), b(1), b'(1) and c(10-14). The alpha and beta chains form an alternating ring which encloses part of the gamma chain. F(1) is attached to F(0) by a central stalk formed by the gamma and epsilon chains, while a peripheral stalk is formed by the delta, b and b' chains.

Its subcellular location is the cellular thylakoid membrane. F(1)F(0) ATP synthase produces ATP from ADP in the presence of a proton or sodium gradient. F-type ATPases consist of two structural domains, F(1) containing the extramembraneous catalytic core and F(0) containing the membrane proton channel, linked together by a central stalk and a peripheral stalk. During catalysis, ATP synthesis in the catalytic domain of F(1) is coupled via a rotary mechanism of the central stalk subunits to proton translocation. Functionally, this protein is part of the stalk that links CF(0) to CF(1). It either transmits conformational changes from CF(0) to CF(1) or is implicated in proton conduction. The sequence is that of ATP synthase subunit delta from Nostoc punctiforme (strain ATCC 29133 / PCC 73102).